Reading from the N-terminus, the 32-residue chain is MSDIN-like toxin proprotein a (32 aa).

Positions 1-10 are excised as a propeptide; that stretch reads MSDINATRLP. Residues 11 to 18 constitute a cross-link (cyclopeptide (Ile-Pro)); sequence IIGILLPP. Residues 19–32 constitute a propeptide that is removed on maturation; it reads CIGDDVTLLLTRGE.

The protein belongs to the MSDIN fungal toxin family. Post-translationally, processed by the macrocyclase-peptidase enzyme POPB to yield a toxic cyclic octapeptide. POPB first removes 10 residues from the N-terminus. Conformational trapping of the remaining peptide forces the enzyme to release this intermediate rather than proceed to macrocyclization. The enzyme rebinds the remaining peptide in a different conformation and catalyzes macrocyclization of the N-terminal 8 residues.

Probable toxin that belongs to the MSDIN-like toxin family responsible for a large number of food poisoning cases and deaths. The chain is MSDIN-like toxin proprotein a from Amanita phalloides (Death cap).